The chain runs to 276 residues: Molybdenum storage protein subunit alpha (276 aa).

As to quaternary structure, octamer consisting of 4 alpha and 4 beta chains.

The protein resides in the cytoplasm. Intracellular storage of molybdenum. Binds polyoxomolybdates. Can bind at least 90 molybdenum atoms per protein molecule. The protein is Molybdenum storage protein subunit alpha of Azotobacter vinelandii (strain DJ / ATCC BAA-1303).